Here is a 66-residue protein sequence, read N- to C-terminus: Large ribosomal subunit protein bL35 (66 aa).

Residues 1–26 (MPKQKTHRGAAKRFKKTGSGKLKRSH) form a disordered region.

This sequence belongs to the bacterial ribosomal protein bL35 family.

The polypeptide is Large ribosomal subunit protein bL35 (Bacillus anthracis).